The primary structure comprises 364 residues: Anthranilate phosphoribosyltransferase (364 aa).

Residues 1–10 (MTSGPSQPFP) are compositionally biased toward polar residues. The segment at 1–22 (MTSGPSQPFPSASGPDDGPSWP) is disordered. 5-phospho-alpha-D-ribose 1-diphosphate is bound by residues Gly-101, 104–105 (GD), Thr-109, 111–114 (NLST), 129–137 (KHGNRAASS), and Gly-141. An anthranilate-binding site is contributed by Gly-101. Ser-113 contributes to the Mg(2+) binding site. Asn-132 serves as a coordination point for anthranilate. Arg-187 is a binding site for anthranilate. Mg(2+)-binding residues include Asp-245 and Glu-246.

Belongs to the anthranilate phosphoribosyltransferase family. In terms of assembly, homodimer. Requires Mg(2+) as cofactor.

It carries out the reaction N-(5-phospho-beta-D-ribosyl)anthranilate + diphosphate = 5-phospho-alpha-D-ribose 1-diphosphate + anthranilate. It participates in amino-acid biosynthesis; L-tryptophan biosynthesis; L-tryptophan from chorismate: step 2/5. In terms of biological role, catalyzes the transfer of the phosphoribosyl group of 5-phosphorylribose-1-pyrophosphate (PRPP) to anthranilate to yield N-(5'-phosphoribosyl)-anthranilate (PRA). The protein is Anthranilate phosphoribosyltransferase of Mycolicibacterium smegmatis (strain ATCC 700084 / mc(2)155) (Mycobacterium smegmatis).